Reading from the N-terminus, the 265-residue chain is Tyrosine protein kinase-interacting protein (265 aa).

Over residues 1–14 (MANEGEEIELTEFP) the composition is skewed to acidic residues. Residues 1–49 (MANEGEEIELTEFPETEKERKDEEKLSSCSEETTDTSSSSSSDHVPAPI) form a disordered region. Residues 1-238 (MANEGEEIEL…LKRLENKVNA (238 aa)) are Cytoplasmic-facing. Residues 15–26 (ETEKERKDEEKL) show a composition bias toward basic and acidic residues. The span at 27–43 (SSCSEETTDTSSSSSSD) shows a compositional bias: low complexity. Tyrosine 123 carries the post-translational modification Phosphotyrosine; by host LCK. Residue tyrosine 136 is modified to Phosphotyrosine; by host. Residues 155-164 (EDLQSFLEKY) form a CSKH/LBD2 region. The tract at residues 172 to 192 (KRDLSATWDPGMPTPALPPRP) is disordered. The SH3B/LBD1 stretch occupies residues 183-192 (MPTPALPPRP). A compositionally biased stretch (pro residues) spans 183-192 (MPTPALPPRP). Positions 225–234 (IVKDLKRLEN) are SH3 binding. Residues 239–259 (IICLVVVILAVLLLVTVLSIL) traverse the membrane as a helical segment. Residues 260-265 (HIGMKS) lie on the Extracellular side of the membrane.

Binds host LCK, human WDR48 and human NXF1/TAP. Forms a complex with activated LCK and STAT1 and STAT3. Phosphorylation on Tyr-123 acts as a docking site for the recruitment of STATs 1 and 3.

The protein resides in the host cell membrane. Plays a critical role in virus induced T-cell transformation. Binds to T-cell-specific tyrosine kinase LCK SH2 and SH3 domains, thereby activating its kinase activity. Once phosphorylated by host LCK, forms a complex with at least STAT 1 and 3, resulting on the phosphorylation of STAT3 and presumably STAT1, and their migration into the nucleus to induce transcription of target genes. Stimulates host ILF3/NF-AT-90 activity. Association with host NXF1/TAP transduces the signal up-regulating surface expression of adhesion molecules as well as activating NF-kappa-B activity. Acts synergistically with StpC to stimulate NF-kappa-B activity and interleukin-2 gene expression. Activation of NF-kappa-B protects lymphocytes from apoptosis, thereby facilitating viral induced cell transformation. May cause down-regulation of host LCK and cell apoptosis when stably overexpressed ex vivo. Interaction with WDR48 induce degradation of T-cell receptor in a lysosome-dependent fashion, when both proteins are overexpressed. The biological effect of this interaction remains controversial since no T-cell receptor degradation is observed in infected cells. The sequence is that of Tyrosine protein kinase-interacting protein from Saimiriine herpesvirus 2 (strain 484) (SaHV-2).